Reading from the N-terminus, the 110-residue chain is MQAIAIHKFARGSAQKARLVADQIRGVNVEKALEILTFSNKKAAELVKKVLNSAIANAEHNEGADIDELFVKTILIDDGPTMKRIMPRAKGRADRIIKRTSHITVIVSDS.

This sequence belongs to the universal ribosomal protein uL22 family. Part of the 50S ribosomal subunit.

Functionally, this protein binds specifically to 23S rRNA; its binding is stimulated by other ribosomal proteins, e.g. L4, L17, and L20. It is important during the early stages of 50S assembly. It makes multiple contacts with different domains of the 23S rRNA in the assembled 50S subunit and ribosome. Its function is as follows. The globular domain of the protein is located near the polypeptide exit tunnel on the outside of the subunit, while an extended beta-hairpin is found that lines the wall of the exit tunnel in the center of the 70S ribosome. This is Large ribosomal subunit protein uL22 from Colwellia psychrerythraea (strain 34H / ATCC BAA-681) (Vibrio psychroerythus).